We begin with the raw amino-acid sequence, 442 residues long: MEINNVSSEIIKPSSPTPQHLKTHKLSVLDQVAGDSLFPIILFYPQTCSNNTSLNKTSDLLKRSLSQTLTLYHPFAGRLKDEFSIDCDDTGATFIEARAAASDMSEIVKQPTVDMLEQLMPYKLNEKPSVAVNLAAKVTYFEHCGGMALCVCFSHVIADITTAANFIKTWVTFASGSDTSSEDDDVIKHAVFGCSSIFPPQKFSSFSRNVISENHSNSAEILTKRFIFDGDKIAALKEKMGSESSSGYHPTRVEAVSAIILGGIMSVEKQADDFNHSHLVASIAVNLRNRVNPPIPEQSIGNIVQAGIAKLPIEKKTIDYRNLAETLHKSIEKINDEYLRKFHADGGFLSNMNDVLEGLFDKNCRWFTISAWCRRPLYEADFGWGKPAWVSTVMKHKDVAVLLDSSDGKGIEAWVALPKKDMAKFEQDSGILRYASIDTSLI.

Catalysis depends on proton acceptor residues His155 and Asp381.

This sequence belongs to the plant acyltransferase family. In terms of assembly, monomer.

It carries out the reaction (1S)-1-hydroxy-luvungin A + acetyl-CoA = (1S)-1-acetoxy-luvungin A + CoA. It participates in secondary metabolite biosynthesis; terpenoid biosynthesis. Its function is as follows. Acetyltransferase involved in the biosynthesis of limonoids triterpene natural products such as limonin, a compound with insecticidal activity responsible for the bitter taste in citrus. Catalyzes the formation of (1S)-1-acetoxy-luvungin A from (1S)-1-hydroxy-luvungin A. This Citrus sinensis (Sweet orange) protein is Limonoid 1-O-acetyltransferse.